The following is a 340-amino-acid chain: Cell growth-regulated gene 1 protein (340 aa).

It belongs to the SMP-30/CGR1 family.

Functionally, involved in the cell growth regulation. In Candida albicans (strain SC5314 / ATCC MYA-2876) (Yeast), this protein is Cell growth-regulated gene 1 protein (CGR1).